We begin with the raw amino-acid sequence, 351 residues long: Prohormone-2 (351 aa).

The first 21 residues, 1-21, serve as a signal peptide directing secretion; the sequence is MMCDWVWLLLTLCSLLMIVQS. 2 propeptides span residues 22–177 and 192–319; these read LPTN…QTQV and ELDI…MISR. Polar residues predominate over residues 51–69; the sequence is GNQQNHQPENNPSSSYSST. Disordered regions lie at residues 51–71 and 136–176; these read GNQQ…STAE and NEDR…VQTQ. Over residues 136 to 145 the composition is skewed to basic and acidic residues; sequence NEDRRKRSEK. The span at 158–176 shows a compositional bias: low complexity; it reads PSTTSFQSPTSTQQSVQTQ.

It is found in the secreted. This chain is Prohormone-2, found in Apis mellifera (Honeybee).